Here is a 331-residue protein sequence, read N- to C-terminus: Biotin synthase (331 aa).

In terms of domain architecture, Radical SAM core spans 52 to 277; it reads PEVEVEGIVS…RTILRYAGGR (226 aa). [4Fe-4S] cluster-binding residues include Cys67, Cys71, and Cys74. [2Fe-2S] cluster is bound by residues Cys110, Cys202, and Arg272.

Belongs to the radical SAM superfamily. Biotin synthase family. As to quaternary structure, homodimer. Requires [4Fe-4S] cluster as cofactor. It depends on [2Fe-2S] cluster as a cofactor.

It catalyses the reaction (4R,5S)-dethiobiotin + (sulfur carrier)-SH + 2 reduced [2Fe-2S]-[ferredoxin] + 2 S-adenosyl-L-methionine = (sulfur carrier)-H + biotin + 2 5'-deoxyadenosine + 2 L-methionine + 2 oxidized [2Fe-2S]-[ferredoxin]. Its pathway is cofactor biosynthesis; biotin biosynthesis; biotin from 7,8-diaminononanoate: step 2/2. Catalyzes the conversion of dethiobiotin (DTB) to biotin by the insertion of a sulfur atom into dethiobiotin via a radical-based mechanism. This chain is Biotin synthase, found in Salinispora arenicola (strain CNS-205).